The sequence spans 574 residues: Septation ring formation regulator EzrA (574 aa).

At 1–7 (MSSGIIL) the chain is on the extracellular side. A helical membrane pass occupies residues 8-26 (LIVAIVLLVIIAYLIGVII). Residues 27 to 574 (RKRNDSMIGT…YERTREHIRF (548 aa)) lie on the Cytoplasmic side of the membrane. Coiled coils occupy residues 102-140 (NFIR…QEEK), 243-379 (RRLL…GQEI), and 459-520 (QLEA…SFEA).

This sequence belongs to the EzrA family.

The protein localises to the cell membrane. Functionally, negative regulator of FtsZ ring formation; modulates the frequency and position of FtsZ ring formation. Inhibits FtsZ ring formation at polar sites. Interacts either with FtsZ or with one of its binding partners to promote depolymerization. The protein is Septation ring formation regulator EzrA of Streptococcus uberis (strain ATCC BAA-854 / 0140J).